The chain runs to 37 residues: DICDDAVAQCSMTLCQLCYNTEICELSVIGSCQPPFS.

Intrachain disulfides connect Cys3-Cys18, Cys10-Cys32, and Cys15-Cys24.

Homodimer.

The protein localises to the secreted. In terms of biological role, mating ciliate pheromones (or gamones) are diffusible extracellular communication signals that distinguish different intraspecific classes of cells commonly referred to as 'mating types'. They prepare the latter for conjugation by changing their cell surface properties. The sequence is that of Mating pheromone Er-20 (MAT20) from Euplotes raikovi.